Reading from the N-terminus, the 148-residue chain is Deoxyuridine 5'-triphosphate nucleotidohydrolase (148 aa).

Residues 67 to 69 (RSG), N80, 84 to 86 (LID), and M94 contribute to the substrate site.

It belongs to the dUTPase family. It depends on Mg(2+) as a cofactor.

The catalysed reaction is dUTP + H2O = dUMP + diphosphate + H(+). The protein operates within pyrimidine metabolism; dUMP biosynthesis; dUMP from dCTP (dUTP route): step 2/2. Functionally, this enzyme is involved in nucleotide metabolism: it produces dUMP, the immediate precursor of thymidine nucleotides and it decreases the intracellular concentration of dUTP so that uracil cannot be incorporated into DNA. This is Deoxyuridine 5'-triphosphate nucleotidohydrolase from Burkholderia thailandensis (strain ATCC 700388 / DSM 13276 / CCUG 48851 / CIP 106301 / E264).